Consider the following 228-residue polypeptide: DNA repair protein RecO (228 aa).

The protein belongs to the RecO family.

Functionally, involved in DNA repair and RecF pathway recombination. This chain is DNA repair protein RecO, found in Mannheimia succiniciproducens (strain KCTC 0769BP / MBEL55E).